Reading from the N-terminus, the 385-residue chain is Glucose-fructose oxidoreductase domain-containing protein 2 (385 aa).

The first 25 residues, 1-25 (MKMLPGVGVFGTGSSARVLVPLLRA), serve as a signal peptide directing secretion.

It belongs to the Gfo/Idh/MocA family.

The protein localises to the secreted. The protein resides in the extracellular space. Its subcellular location is the extracellular matrix. Promotes matrix assembly. The protein is Glucose-fructose oxidoreductase domain-containing protein 2 (GFOD2) of Bos taurus (Bovine).